Reading from the N-terminus, the 544-residue chain is Methionine--tRNA ligase (544 aa).

A 'HIGH' region motif is present at residues 10 to 20; sequence PYANGSLHLGH. Residues Cys-141, Cys-144, Cys-153, and Cys-156 each coordinate Zn(2+). A 'KMSKS' region motif is present at residues 329-333; that stretch reads KLSTS. Thr-332 lines the ATP pocket.

Belongs to the class-I aminoacyl-tRNA synthetase family. MetG type 1 subfamily. In terms of assembly, monomer. Zn(2+) is required as a cofactor.

It is found in the cytoplasm. The catalysed reaction is tRNA(Met) + L-methionine + ATP = L-methionyl-tRNA(Met) + AMP + diphosphate. In terms of biological role, is required not only for elongation of protein synthesis but also for the initiation of all mRNA translation through initiator tRNA(fMet) aminoacylation. This Bacillus cereus (strain AH187) protein is Methionine--tRNA ligase.